Consider the following 271-residue polypeptide: MSQNIVYSLTALMALLPASIYPYHRIAGQGADGRSAYFWGALVLGFAGPAAWALTQVAGRWHTGLSTALWITIAACMLLFMAMSALTRSAWRLSPLLLPYLLTVGAFATLAQQAPAPVVRGGAPGIWIDLHIAVSVITYALLTMAAVASLAAFLQERALKSKRPTPLTRFLPPVTESERMQLHLLGASEAVLGAGLATGMAVLYYETGALLRADHKTLLSVASFVVIGGLLLAHARTGVRGRMAARLVLIAYLLLTLAYPGVKFVTDVLLG.

This is an uncharacterized protein from Azospirillum brasilense.